A 115-amino-acid polypeptide reads, in one-letter code: Large ribosomal subunit protein bL20c (115 aa).

The protein belongs to the bacterial ribosomal protein bL20 family.

It localises to the plastid. It is found in the chloroplast. Functionally, binds directly to 23S ribosomal RNA and is necessary for the in vitro assembly process of the 50S ribosomal subunit. It is not involved in the protein synthesizing functions of that subunit. This chain is Large ribosomal subunit protein bL20c, found in Chaetosphaeridium globosum (Charophycean green alga).